The chain runs to 313 residues: Ribosomal RNA small subunit methyltransferase H (313 aa).

S-adenosyl-L-methionine-binding positions include 36–38 (GGH), aspartate 56, phenylalanine 80, aspartate 102, and glutamine 109.

This sequence belongs to the methyltransferase superfamily. RsmH family.

Its subcellular location is the cytoplasm. The catalysed reaction is cytidine(1402) in 16S rRNA + S-adenosyl-L-methionine = N(4)-methylcytidine(1402) in 16S rRNA + S-adenosyl-L-homocysteine + H(+). Specifically methylates the N4 position of cytidine in position 1402 (C1402) of 16S rRNA. This Actinobacillus pleuropneumoniae serotype 7 (strain AP76) protein is Ribosomal RNA small subunit methyltransferase H.